A 428-amino-acid polypeptide reads, in one-letter code: Enolase (428 aa).

Q163 provides a ligand contact to (2R)-2-phosphoglycerate. E205 (proton donor) is an active-site residue. Residues D242, E286, and D313 each contribute to the Mg(2+) site. K338, R367, S368, and K389 together coordinate (2R)-2-phosphoglycerate. K338 (proton acceptor) is an active-site residue.

This sequence belongs to the enolase family. It depends on Mg(2+) as a cofactor.

Its subcellular location is the cytoplasm. It is found in the secreted. The protein resides in the cell surface. It carries out the reaction (2R)-2-phosphoglycerate = phosphoenolpyruvate + H2O. Its pathway is carbohydrate degradation; glycolysis; pyruvate from D-glyceraldehyde 3-phosphate: step 4/5. Functionally, catalyzes the reversible conversion of 2-phosphoglycerate (2-PG) into phosphoenolpyruvate (PEP). It is essential for the degradation of carbohydrates via glycolysis. The polypeptide is Enolase (Bordetella bronchiseptica (strain ATCC BAA-588 / NCTC 13252 / RB50) (Alcaligenes bronchisepticus)).